The chain runs to 138 residues: MLQPARTKYRKMMKGRMRGKAYRGSDLNQGEYGLQATECGWLTARQIEAARVAITRYVKRGGKLWIRVFPDKPITKKPAETRMGTGKGNVEYYVAVVKPGRVLYELAGVDDESAKKAFHLAAHKLPVATKLVKRGSTL.

It belongs to the universal ribosomal protein uL16 family. Part of the 50S ribosomal subunit.

In terms of biological role, binds 23S rRNA and is also seen to make contacts with the A and possibly P site tRNAs. The chain is Large ribosomal subunit protein uL16 from Anaeromyxobacter sp. (strain Fw109-5).